The following is a 157-amino-acid chain: Probable calcium-binding protein CML15 (157 aa).

4 consecutive EF-hand domains span residues 3–38, 39–74, 78–113, and 114–149; these read DQIR…LGLK, PSGD…DLNE, INSE…MGQP, and LTYK…SAVD. Aspartate 16, aspartate 18, aspartate 20, serine 22, glutamate 27, aspartate 52, asparagine 54, asparagine 56, glutamate 63, aspartate 91, aspartate 93, asparagine 95, glutamate 102, aspartate 127, asparagine 129, aspartate 131, and glutamate 138 together coordinate Ca(2+).

In terms of biological role, potential calcium sensor. This is Probable calcium-binding protein CML15 (CML15) from Arabidopsis thaliana (Mouse-ear cress).